We begin with the raw amino-acid sequence, 261 residues long: 6-carboxyhexanoate--CoA ligase (261 aa).

Belongs to the BioW family. In terms of assembly, homodimer. Mg(2+) serves as cofactor.

The enzyme catalyses heptanedioate + ATP + CoA = 6-carboxyhexanoyl-CoA + AMP + diphosphate. It functions in the pathway metabolic intermediate metabolism; pimeloyl-CoA biosynthesis; pimeloyl-CoA from pimelate: step 1/1. Its function is as follows. Catalyzes the transformation of pimelate into pimeloyl-CoA with concomitant hydrolysis of ATP to AMP. This is 6-carboxyhexanoate--CoA ligase from Bacillus licheniformis (strain ATCC 14580 / DSM 13 / JCM 2505 / CCUG 7422 / NBRC 12200 / NCIMB 9375 / NCTC 10341 / NRRL NRS-1264 / Gibson 46).